The following is a 179-amino-acid chain: MKILITGRPGVGKTTLIKKLSCLLQNAGGFYTEEIRESGKRIGFKIVTLDGEEGILARTDLPFPYRVGKYYVNLKDLEEIGVRSLEGALREKNLIIVDEIGKMELLSSKFREVVEKIFDSEKDVIATIKKSSDPFVERIKSRDGVVVFELNEKNRDSLLKEILYVLKFNRGENNDTGAD.

ATP contacts are provided by residues 7–14 (GRPGVGKT) and 94–101 (LIIVDEIG).

The protein belongs to the THEP1 NTPase family.

It catalyses the reaction a ribonucleoside 5'-triphosphate + H2O = a ribonucleoside 5'-diphosphate + phosphate + H(+). In terms of biological role, has nucleotide phosphatase activity towards ATP, GTP, CTP, TTP and UTP. May hydrolyze nucleoside diphosphates with lower efficiency. This chain is Nucleoside-triphosphatase THEP1, found in Thermotoga petrophila (strain ATCC BAA-488 / DSM 13995 / JCM 10881 / RKU-1).